Here is a 61-residue protein sequence, read N- to C-terminus: [Thr6]-bradykinyl-Val,Asp (61 aa).

The first 22 residues, 1-22 (MSFLKKSLFLVLFLGFVSFSIC), serve as a signal peptide directing secretion. A propeptide spanning residues 23–50 (EEEKREDEEEENEREENKESEEKRNQEE) is cleaved from the precursor. The tract at residues 24–61 (EEKREDEEEENEREENKESEEKRNQEERPPGFTPFRVD) is disordered. The span at 26–36 (KREDEEEENER) shows a compositional bias: acidic residues. Basic and acidic residues predominate over residues 37–52 (EENKESEEKRNQEERP). The residue at position 53 (Pro-53) is a 4-hydroxyproline; in form [Hyp3,Thr6]-bradykinyl-Val,Asp and [Hyp3,Thr6]-bradykinin.

The protein belongs to the frog skin active peptide (FSAP) family. Bradykinin-related peptide subfamily. Expressed by the skin glands.

It is found in the secreted. Functionally, induces relaxation of rat smooth muscle from tail artery (EC(50)=16.8 nM) and contraction of that from ileum (EC(50)=205 nM), urinary bladder (EC(50)=895 nM) and uterus (EC(50)=60.3 nM). Binds to both bradykinin receptor B1 (BDKRB1) and B2 (BDKRB2). Its function is as follows. [Hyp3,Thr6]-bradykinin: Induces relaxation of rat smooth muscle from tail artery (EC(50)=56.7 nM) and contraction of that from ileum (EC(50)=588 nM), urinary bladder (EC(50)=4.6 uM) and uterus (EC(50)=3.9 nM). Binds to both bradykinin receptor B1 (BDKRB1) and B2 (BDKRB2). In arterial smooth muscle, the effect via BDKRB1 is stronger, in uterus, ileum and urinary bladder the effect via BDKRB2. Induces relaxation of rat smooth muscle from tail artery (EC(50)=10.8 nM) and contraction of that from ileum (EC(50)=645 nM), urinary bladder (EC(50)=1.1 uM) and uterus (EC(50)=1.2 uM). Binds to both bradykinin receptor B1 (BDKRB1) and B2 (BDKRB2). Apart from uterus smooth muscle, the effect via BDKRB2 is stronger. In terms of biological role, [Hyp3,Thr6]-bradykinyl-Val,Asp: Induces relaxation of rat smooth muscle from tail artery (EC(50)=3.5 nM) and contraction of that from ileum (EC(50)=223 nM), urinary bladder (EC(50)=1.5 uM) and uterus (EC(50)=356 nM). Binds to both bradykinin receptor B1 (BDKRB1) and B2 (BDKRB2); the effects via BDKRB2 are stronger. In Agalychnis dacnicolor (Giant Mexican leaf frog), this protein is [Thr6]-bradykinyl-Val,Asp.